The primary structure comprises 159 residues: Large ribosomal subunit protein uL15 (159 aa).

Residues 14-44 form a disordered region; the sequence is ASRKRVGRGRATGWGCTSGRGNKGQNSRAGA. Residues 23–35 show a composition bias toward gly residues; the sequence is RATGWGCTSGRGN.

The protein belongs to the universal ribosomal protein uL15 family. Part of the 50S ribosomal subunit.

Binds to the 23S rRNA. The sequence is that of Large ribosomal subunit protein uL15 from Solidesulfovibrio magneticus (strain ATCC 700980 / DSM 13731 / RS-1) (Desulfovibrio magneticus).